The following is a 250-amino-acid chain: Aquaporin TIP1-1 (250 aa).

2 consecutive transmembrane segments (helical) span residues 24 to 44 and 56 to 76; these read FAEFISTLIFVFAGQGSGMAF and AGLIAAAVAHAFALFVAVSVG. The NPA 1 signature appears at 85–87; sequence NPA. 3 consecutive transmembrane segments (helical) span residues 104–126, 143–163, and 172–192; these read LLYWVAQLLGSTVACFLLRFSTG, ALVLEIVMTFGLVYTVYATAV, and TIAPIAIGFIVGANILVGGAF. The NPA 2 signature appears at 198-200; that stretch reads NPA. The chain crosses the membrane as a helical span at residues 218-238; that stretch reads YWVGPLIGGGLAGVIYELLFI.

It belongs to the MIP/aquaporin (TC 1.A.8) family. TIP (TC 1.A.8.10) subfamily. As to expression, expressed in roots, shoots, leaves, tassels, ears and embryos. Expressed in meristems and zones of cell enlargement: tips of primary and lateral roots, leaf primordia, and male and female inflorescence meristems. Highly expressed in the root epidermis and endodermis, parenchyma cells surrounding mature xylem vessels in the root and the stem, phloem companion cells and a ring of cells around the phloem strand in the stem and the leaf sheath, and the basal endosperm transfer cells in developing kernels.

It localises to the vacuole membrane. Functionally, water channel required to facilitate the transport of water across cell membrane. May support the rapid influx of water into vacuoles during cell expansion, permit osmotic equilibration between the cytosol and the vacuolar content and rapid transcellular water flow through living cells. Its function is impaired by Hg(2+). The chain is Aquaporin TIP1-1 (TIP1-1) from Zea mays (Maize).